Here is a 395-residue protein sequence, read N- to C-terminus: MRN complex-interacting protein (395 aa).

A compositionally biased stretch (basic and acidic residues) spans 90–100 (DPKSEQEEAHV). Disordered regions lie at residues 90 to 155 (DPKS…GGNC) and 180 to 275 (KRSS…FGES). Residues 104–113 (SKYTDQTTEG) show a composition bias toward polar residues. Positions 117–127 (EKDDEDEDENV) are enriched in acidic residues. Residues 142-145 (RKKM) carry the Nuclear localization signal (NLS) motif. Residues 183–195 (SSSWNKGSVSKYS) show a composition bias toward low complexity. Polar residues-rich tracts occupy residues 224 to 244 (ACSS…QIKS) and 260 to 270 (QSESPSVSSHQ).

The protein belongs to the MRNIP family.

It localises to the nucleus. It is found in the nucleoplasm. In terms of biological role, plays a role in the cellular response to DNA damage and the maintenance of genome stability through its association with the MRN damage-sensing complex. Promotes chromatin loading and activity of the MRN complex to facilitate subsequent ATM-mediated DNA damage response signaling and DNA repair. This Danio rerio (Zebrafish) protein is MRN complex-interacting protein.